The following is a 186-amino-acid chain: uncharacterized protein (186 aa).

The signal sequence occupies residues 1-18; sequence MNKFLFAAALIVSGLLVG. Cys19 is lipidated: N-palmitoyl cysteine. A lipid anchor (S-diacylglycerol cysteine) is attached at Cys19.

The protein localises to the cell membrane. This is an uncharacterized protein from Escherichia coli (strain K12).